We begin with the raw amino-acid sequence, 156 residues long: Snaclec stejaggregin-B subunit alpha (156 aa).

An N-terminal signal peptide occupies residues 1 to 23 (MGRFISVSFGLLVVFLSLSGTGA). 3 disulfide bridges follow: Cys-25–Cys-36, Cys-53–Cys-150, and Cys-125–Cys-142. The C-type lectin domain maps to 32–151 (FKQYCYQIIK…CEQKHLFMCK (120 aa)).

Belongs to the snaclec family. In terms of assembly, heteromultimer; disulfide-linked. As to expression, expressed by the venom gland.

Its subcellular location is the secreted. Interferes with one step of hemostasis (modulation of platelet aggregation, or coagulation cascade, for example). The chain is Snaclec stejaggregin-B subunit alpha from Trimeresurus stejnegeri (Chinese green tree viper).